Reading from the N-terminus, the 175-residue chain is Shikimate kinase (175 aa).

ATP is bound at residue 16-21 (GAGKST). A Mg(2+)-binding site is contributed by Ser-20. Residues Asp-38, Arg-62, and Gly-84 each coordinate substrate. Arg-122 is a binding site for ATP. Arg-141 provides a ligand contact to substrate.

It belongs to the shikimate kinase family. In terms of assembly, monomer. Requires Mg(2+) as cofactor.

It localises to the cytoplasm. The catalysed reaction is shikimate + ATP = 3-phosphoshikimate + ADP + H(+). It participates in metabolic intermediate biosynthesis; chorismate biosynthesis; chorismate from D-erythrose 4-phosphate and phosphoenolpyruvate: step 5/7. In terms of biological role, catalyzes the specific phosphorylation of the 3-hydroxyl group of shikimic acid using ATP as a cosubstrate. The protein is Shikimate kinase of Legionella pneumophila (strain Paris).